Reading from the N-terminus, the 313-residue chain is Dihydroorotate dehydrogenase (fumarate) (313 aa).

FMN-binding positions include A20 and 44-45 (KS). Residues K44, 68–72 (NSMGL), and N128 each bind substrate. Position 128 (N128) interacts with FMN. C131 acts as the Nucleophile in catalysis. N133 is a binding site for substrate. K165 and V194 together coordinate FMN. 195-196 (NS) serves as a coordination point for substrate. Residues G223, C249, 249–251 (CGG), and 272–273 (GT) each bind FMN.

This sequence belongs to the dihydroorotate dehydrogenase family. Type 1 subfamily. As to quaternary structure, homodimer. It depends on FMN as a cofactor.

The protein resides in the cytoplasm. The enzyme catalyses (S)-dihydroorotate + fumarate = orotate + succinate. It participates in pyrimidine metabolism; UMP biosynthesis via de novo pathway. Its function is as follows. Catalyzes the conversion of dihydroorotate to orotate with fumarate as the electron acceptor. Molecular oxygen can replace fumarate in vitro. The protein is Dihydroorotate dehydrogenase (fumarate) of Trypanosoma brucei brucei (strain 927/4 GUTat10.1).